Reading from the N-terminus, the 231-residue chain is Ribose-5-phosphate isomerase A (231 aa).

Residues 32–35 (TGST), 85–88 (DGAD), and 98–101 (KGGG) contribute to the substrate site. E107 acts as the Proton acceptor in catalysis. K125 serves as a coordination point for substrate.

This sequence belongs to the ribose 5-phosphate isomerase family. In terms of assembly, homodimer.

It carries out the reaction aldehydo-D-ribose 5-phosphate = D-ribulose 5-phosphate. Its pathway is carbohydrate degradation; pentose phosphate pathway; D-ribose 5-phosphate from D-ribulose 5-phosphate (non-oxidative stage): step 1/1. In terms of biological role, catalyzes the reversible conversion of ribose-5-phosphate to ribulose 5-phosphate. This Burkholderia mallei (strain NCTC 10247) protein is Ribose-5-phosphate isomerase A.